The sequence spans 581 residues: Arginine--tRNA ligase (581 aa).

Positions 126–136 (PNLAKEMHVGH) match the 'HIGH' region motif.

The protein belongs to the class-I aminoacyl-tRNA synthetase family. In terms of assembly, monomer.

It localises to the cytoplasm. It carries out the reaction tRNA(Arg) + L-arginine + ATP = L-arginyl-tRNA(Arg) + AMP + diphosphate. The protein is Arginine--tRNA ligase of Shewanella halifaxensis (strain HAW-EB4).